A 242-amino-acid polypeptide reads, in one-letter code: Endothelial protein C receptor (242 aa).

An N-terminal signal peptide occupies residues 1–17 (MLTKFLPLLLLLLPGCA). The Extracellular portion of the chain corresponds to 18–214 (LCNSDGSQSL…GSQTGRSYTS (197 aa)). Residues asparagine 46, asparagine 63, asparagine 140, asparagine 166, and asparagine 176 are each glycosylated (N-linked (GlcNAc...) asparagine). Cystine bridges form between cysteine 119/cysteine 190 and cysteine 223/cysteine 236. The helical transmembrane segment at 215–235 (LVLGILMGCFIIAGVAVGIFM) threads the bilayer. The Cytoplasmic segment spans residues 236 to 242 (CTSGRRC).

In terms of tissue distribution, expressed in endothelial cells.

The protein localises to the membrane. Functionally, binds activated protein C. Enhances protein C activation by the thrombin-thrombomodulin complex; plays a role in the protein C pathway controlling blood coagulation. The protein is Endothelial protein C receptor (Procr) of Mus musculus (Mouse).